We begin with the raw amino-acid sequence, 273 residues long: MMKRQFEDVTRIVIKIGTSSLVLPTGKINLEKIDQLAFVISSLMNKGKEVILVSSGAMGFGLDILKMEKRPTNLAKQQAVSSVGQVAMMSLYSQIFAHYQTNVSQILLTRDVVVFPESLANVTNAFESLISLGIVPIVNENDAVSVDEMDHATKFGDNDRLSAVVAGITKADLLIMLSDIDGLFDKNPTIYEDAQLRSHVAVITQEIIASAGGAGSKFGTGGMLSKIQSAQMVFENKGQMVLMNGANPRDILRVLEGQLLGTWFKQIEEVRHD.

Lys-15 is a binding site for ATP. Substrate-binding residues include Ser-55, Asp-142, and Asn-158. Residues 178 to 179 and 220 to 226 contribute to the ATP site; these read SD and TGGMLSK.

This sequence belongs to the glutamate 5-kinase family.

Its subcellular location is the cytoplasm. It carries out the reaction L-glutamate + ATP = L-glutamyl 5-phosphate + ADP. Its pathway is amino-acid biosynthesis; L-proline biosynthesis; L-glutamate 5-semialdehyde from L-glutamate: step 1/2. Its function is as follows. Catalyzes the transfer of a phosphate group to glutamate to form L-glutamate 5-phosphate. The polypeptide is Glutamate 5-kinase (Streptococcus pyogenes serotype M49 (strain NZ131)).